The chain runs to 160 residues: Small ribosomal subunit protein uS7 (160 aa).

This sequence belongs to the universal ribosomal protein uS7 family. In terms of assembly, part of the 30S ribosomal subunit. Contacts proteins S9 and S11.

One of the primary rRNA binding proteins, it binds directly to 16S rRNA where it nucleates assembly of the head domain of the 30S subunit. Is located at the subunit interface close to the decoding center, probably blocks exit of the E-site tRNA. In Rickettsia typhi (strain ATCC VR-144 / Wilmington), this protein is Small ribosomal subunit protein uS7.